Here is a 121-residue protein sequence, read N- to C-terminus: Large ribosomal subunit protein bL12 (121 aa).

The protein belongs to the bacterial ribosomal protein bL12 family. Homodimer. Part of the ribosomal stalk of the 50S ribosomal subunit. Forms a multimeric L10(L12)X complex, where L10 forms an elongated spine to which 2 to 4 L12 dimers bind in a sequential fashion. Binds GTP-bound translation factors.

Functionally, forms part of the ribosomal stalk which helps the ribosome interact with GTP-bound translation factors. Is thus essential for accurate translation. In Lactococcus lactis subsp. lactis (strain IL1403) (Streptococcus lactis), this protein is Large ribosomal subunit protein bL12.